A 254-amino-acid chain; its full sequence is MPEANTFSDAGPDLWQCLGWQPNENQLSQLKELQALLRHWNSRVNLTRLVENEEFWIAQVFDSLWPLEKELRTPDLTRRCIDVGTGGGFPGLAVAIALPGTSLTLVDSVGRKTAAVESMANALGLGTRVDVRTERVEVTGQKRSCRGTFDLAMARAVATPPVVAEYLVPLLAHQGQALLYRGHWSNDDEANLKRALVPLKAKLADCKQINLPAGRGLRTLIRIESIAPCPKSYPRPVGLPNRLPLGNQADDKRS.

Residues glycine 84, phenylalanine 89, 136–137 (VE), and arginine 155 contribute to the S-adenosyl-L-methionine site.

The protein belongs to the methyltransferase superfamily. RNA methyltransferase RsmG family.

It is found in the cytoplasm. In terms of biological role, specifically methylates the N7 position of a guanine in 16S rRNA. The sequence is that of Ribosomal RNA small subunit methyltransferase G from Synechococcus sp. (strain CC9311).